The primary structure comprises 595 residues: Merlin (595 aa).

Ser13 is subject to Phosphoserine. The region spanning 22-311 (FTVRIVTMDA…GNHDLFMRRR (290 aa)) is the FERM domain. Position 518 is a phosphoserine; by PAK (Ser518).

As to quaternary structure, interacts with NHERF1, HGS and AGAP2. Interacts with SGSM3. Interacts (via FERM domain) with MPP1. Interacts with LAYN and WWC1. Interacts with the CUL4A-RBX1-DDB1-VprBP/DCAF1 E3 ubiquitin-protein ligase complex. The unphosphorylated form interacts (via FERM domain) with VPRBP/DCAF1. Interacts (via FERM domain) with NOP53; the interaction is direct. Interacts with SCHIP1; the interaction is direct. Post-translationally, phosphorylation of Ser-518 inhibits nuclear localization by disrupting the intramolecular association of the FERM domain with the C-terminal tail. Ubiquitinated by the CUL4A-RBX1-DDB1-DCAF1/VprBP E3 ubiquitin-protein ligase complex for ubiquitination and subsequent proteasome-dependent degradation. In terms of processing, phosphorylation of Ser-518 inhibits nuclear localization by disrupting the intramolecular association of the FERM domain with the C-terminal tail. The dephosphorylation of Ser-518 favors the interaction with NOP53.

The protein localises to the cell membrane. Its subcellular location is the cell projection. It localises to the cytoplasm. The protein resides in the cytoskeleton. It is found in the nucleus. Probable regulator of the Hippo/SWH (Sav/Wts/Hpo) signaling pathway, a signaling pathway that plays a pivotal role in tumor suppression by restricting proliferation and promoting apoptosis. Along with WWC1 can synergistically induce the phosphorylation of LATS1 and LATS2 and can probably function in the regulation of the Hippo/SWH (Sav/Wts/Hpo) signaling pathway. May act as a membrane stabilizing protein. May inhibit PI3 kinase by binding to AGAP2 and impairing its stimulating activity. Suppresses cell proliferation and tumorigenesis by inhibiting the CUL4A-RBX1-DDB1-VprBP/DCAF1 E3 ubiquitin-protein ligase complex. The sequence is that of Merlin (NF2) from Papio anubis (Olive baboon).